A 329-amino-acid polypeptide reads, in one-letter code: Malate dehydrogenase (329 aa).

12-18 contacts NAD(+); sequence GAAGQIG. Substrate-binding residues include Arg-93 and Arg-99. NAD(+) is bound by residues Asn-106, Gln-113, and 130-132; that span reads VGN. Residues Asn-132 and Arg-163 each coordinate substrate. The Proton acceptor role is filled by His-188.

The protein belongs to the LDH/MDH superfamily. MDH type 2 family.

The catalysed reaction is (S)-malate + NAD(+) = oxaloacetate + NADH + H(+). Strongly inhibited by Hg(2+) and Zn(2+). Activated by Na(+), NH(4)(+), Ca(2+), Cu(2+) and Mg(2+). In terms of biological role, catalyzes the reversible oxidation of malate to oxaloacetate. Exhibits remarkably higher catalytic efficiency for oxaloacetate reduction than for malate oxidation in vitro. Highly specific for NAD(H). Can also use NADPH for oxaloacetate reduction, but catalytic efficiency is 97-fold higher with NADH. No activity detected with NADP(+) and malate. The chain is Malate dehydrogenase from Streptomyces avermitilis (strain ATCC 31267 / DSM 46492 / JCM 5070 / NBRC 14893 / NCIMB 12804 / NRRL 8165 / MA-4680).